We begin with the raw amino-acid sequence, 890 residues long: Protein FAM171A1 (890 aa).

Positions 1-21 (MSRSATLLLCLLGCHVWKAVT) are cleaved as a signal peptide. Topologically, residues 22–303 (KTLREPGAGA…VTQDITTYHT (282 aa)) are extracellular. 3 N-linked (GlcNAc...) asparagine glycosylation sites follow: Asn-159, Asn-190, and Asn-194. The helical transmembrane segment at 304 to 324 (VFLLAILGGMAFILLVLLCLL) threads the bilayer. The Cytoplasmic segment spans residues 325–890 (LYYCRRKCLK…ERPLMAFNIK (566 aa)). Residues Ser-358, Ser-360, Ser-371, Ser-422, Ser-443, and Ser-525 each carry the phosphoserine modification. Disordered regions lie at residues 730–759 (AGRN…RGDA) and 818–890 (EGSS…FNIK). The segment covering 747 to 757 (NEPKSARKGRG) has biased composition (basic and acidic residues). The span at 822–833 (RRSGGQLPSLQE) shows a compositional bias: polar residues. Phosphoserine is present on residues Ser-849 and Ser-855. The segment covering 858-869 (EEEEDDDDDDQG) has biased composition (acidic residues). The span at 870 to 883 (EDKKSPWQKREERP) shows a compositional bias: basic and acidic residues.

This sequence belongs to the FAM171 family. Interacts with ADAM10, NSG1 and OAZ1. Expressed in heart, brain, liver, skeletal muscle, kidney and pancreas. In brain, expressed by glia, pyramidal neurons and astrocytes (at protein level). Highly expressed in placental trophoblasts.

It is found in the cell membrane. Functionally, involved in the regulation of the cytoskeletal dynamics, plays a role in actin stress fiber formation. This Homo sapiens (Human) protein is Protein FAM171A1.